We begin with the raw amino-acid sequence, 299 residues long: Protein NSG2 (299 aa).

At Met1–Asn108 the chain is on the cytoplasmic side. Position 90 is a phosphoserine (Ser90). A helical transmembrane segment spans residues Ile109–Leu129. Residues Ser130–Gly161 are Lumenal-facing. Residues Val162–Ile182 form a helical membrane-spanning segment. The Cytoplasmic segment spans residues Leu183–Asn237. Residues Ile238–Gly258 form a helical membrane-spanning segment. Residues Val259 to Asp268 lie on the Lumenal side of the membrane. Residues Ile269 to Phe289 form a helical membrane-spanning segment. Residues Gly290 to His299 lie on the Cytoplasmic side of the membrane.

It belongs to the INSIG family.

The protein resides in the endoplasmic reticulum membrane. Functionally, stabilizes the HMG-CoA reductase HMG2 by preventing its HRD1-dependent degradation. Binds directly to the sterol-sensing domain (SSD)-containing transmembrane region of HMG2, promoting its folding to protect it from degradation. The polypeptide is Protein NSG2 (NSG2) (Saccharomyces cerevisiae (strain ATCC 204508 / S288c) (Baker's yeast)).